The chain runs to 2352 residues: Highly reducing polyketide synthase ZEA2 (2352 aa).

The Ketosynthase family 3 (KS3) domain occupies proline 9–alanine 433. Active-site for beta-ketoacyl synthase activity residues include cysteine 181, histidine 316, and histidine 356. The segment at phenylalanine 544–valine 875 is malonyl-CoA:ACP transacylase (MAT) domain. Serine 634 (for malonyltransferase activity) is an active-site residue. Positions arginine 923 to asparagine 1058 are N-terminal hotdog fold. A PKS/mFAS DH domain is found at arginine 923–alanine 1242. The tract at residues isoleucine 925–glutamate 1237 is dehydratase (DH) domain. Residue histidine 955 is the Proton acceptor; for dehydratase activity of the active site. The C-terminal hotdog fold stretch occupies residues proline 1086–alanine 1242. The Proton donor; for dehydratase activity role is filled by aspartate 1152. An enoylreductase (ER) domain region spans residues glycine 1643–leucine 1955. The tract at residues alanine 1979–aspartate 2159 is catalytic ketoreductase (KRc) domain. A Carrier domain is found at lysine 2269 to serine 2346. At serine 2306 the chain carries O-(pantetheine 4'-phosphoryl)serine.

The protein operates within mycotoxin biosynthesis. Highly reducing polyketide synthase; part of the gene cluster that mediates the biosynthesis of zearalenone (ZEA), a nonsteroid estrogen that is a contaminant of cereal grains and causes estrogenic disorders in humans and animals. The ZEA backbone is synthesized from a single acetyl-CoA molecule and eight malonyl-CoA molecules. The reducing polyketide synthase ZEA2 is proposed to synthesize a reduced hexaketide intermediate by using different combinations of its reductive domains during each round of condensation. The hexaketide thioester is then transacylated to the non-reducing polyketide synthase ZEA1 and is further condensed with three malonyl-CoAs without reductive tailoring to yield a mixed reduced/unreduced nonaketide. ZEA1 must be able to interact with ZEA2 to facilitate starter-unit acyltransfer and initiate polyketide biosynthesis. ZEA1 also mediates the required C2-C7 cyclization to form the resorcylate core and catalyzes the formation of the macrolactone. ZEB1 is then responsible for the chemical conversion of beta-zearalenonol (beta-ZOL) to ZEA in the biosynthetic pathway. The chain is Highly reducing polyketide synthase ZEA2 from Gibberella zeae (strain ATCC MYA-4620 / CBS 123657 / FGSC 9075 / NRRL 31084 / PH-1) (Wheat head blight fungus).